Here is a 429-residue protein sequence, read N- to C-terminus: Adenylosuccinate synthetase (429 aa).

Residues 12 to 18 (GDEGKGK) and 40 to 42 (GHT) each bind GTP. Residue aspartate 13 is the Proton acceptor of the active site. Mg(2+) is bound by residues aspartate 13 and glycine 40. IMP contacts are provided by residues 13–16 (DEGK), 38–41 (NAGH), threonine 129, arginine 143, glutamine 223, threonine 238, and arginine 302. Histidine 41 (proton donor) is an active-site residue. Residue 298-304 (TVTGRPR) participates in substrate binding. GTP contacts are provided by residues arginine 304, 330 to 332 (KLD), and 412 to 414 (STS).

Belongs to the adenylosuccinate synthetase family. In terms of assembly, homodimer. The cofactor is Mg(2+).

It is found in the cytoplasm. It carries out the reaction IMP + L-aspartate + GTP = N(6)-(1,2-dicarboxyethyl)-AMP + GDP + phosphate + 2 H(+). It participates in purine metabolism; AMP biosynthesis via de novo pathway; AMP from IMP: step 1/2. Its function is as follows. Plays an important role in the de novo pathway of purine nucleotide biosynthesis. Catalyzes the first committed step in the biosynthesis of AMP from IMP. This Gluconobacter oxydans (strain 621H) (Gluconobacter suboxydans) protein is Adenylosuccinate synthetase.